The sequence spans 264 residues: MADNDFLSGEAIMVFKKEILDSHSDFTRSLSHQSASPEAYDQENVFSQDFQPFMKQDKETQNSASQPTSEQSLANRDPCTVPDDLREEMMRQRRKEDAFKTALCDAYKRSQACSYGDQCRFAHGVHELRLPMNPRGRNHPKYKTVLCDKFSMTGNCKYGTRCQFIHKIVDGNAAKLASGAHANTSSKSPARNAAAHNHSLFVPQGSTDRSMDLNQSLPIRQSDLVRAFARATRLDVSGYNSTAQLAQYFESQFQRIQQLSSHHH.

The segment at 56–82 (QDKETQNSASQPTSEQSLANRDPCTVP) is disordered. Over residues 61 to 74 (QNSASQPTSEQSLA) the composition is skewed to polar residues. 2 C3H1-type zinc fingers span residues 98–126 (AFKTALCDAYKRSQACSYGDQCRFAHGVH) and 141–169 (KYKTVLCDKFSMTGNCKYGTRCQFIHKIV). Zn(2+) contacts are provided by C104, C113, C119, H123, C147, C156, C162, and H166.

In terms of assembly, monomer.

The protein localises to the cytoplasm. In terms of biological role, RNA-binding protein that coordinates cell fate specification and differentiation during early embryogenesis. Binds to a consensus pos-1 recognition element (PRE) consisting of the sequence 5'-UA(U 2-3)RGD(N 1-3)G-3', where R is any purine, D is A, G, or U, and N is any base. The PRE motif is found within the 3' untranslated region of many maternal transcripts required for early development. Binds to the 3' untranslated region (UTR) of Notch receptor homolog glp-1, thereby repressing glp-1 translation in the posterior blastomeres in the embryo. Binding to glp-1 3' UTR excludes cell fate regulator gld-1 binding to an overlapping binding site in the glp-1 3' UTR. Binds to the neg-1 3'UTR thereby opposing neg-1 expression and cytoplasmic polyadenylation of the neg-1 mRNA poly(A) tail promoted by gld-2 and gld-3. By inhibiting the cytoplasmic lengthening of neg-1 mRNA, restricts the accumulation of neg-1 protein and promotes endo-mesoderm development in anterior blastomeres. Essential for germline specification. The polypeptide is RNA-binding protein pos-1 (Caenorhabditis elegans).